The following is a 149-amino-acid chain: Arginine repressor (149 aa).

This sequence belongs to the ArgR family.

The protein resides in the cytoplasm. It participates in amino-acid biosynthesis; L-arginine biosynthesis [regulation]. Its function is as follows. Regulates arginine biosynthesis genes. In Geobacillus kaustophilus (strain HTA426), this protein is Arginine repressor.